Consider the following 230-residue polypeptide: Cytochrome c oxidase subunit 2 (230 aa).

Residues 1–14 (MAHPTQLGFQDAAS) lie on the Mitochondrial intermembrane side of the membrane. A helical transmembrane segment spans residues 15 to 45 (PVMEELLHFHDHALMIVFLISTLVLYIIIAM). The Mitochondrial matrix portion of the chain corresponds to 46–59 (VSTKLTNKYILDSQ). Residues 60-87 (EIEIVWTILPAVILVLIALPSLRILYLM) traverse the membrane as a helical segment. Residues 88–230 (DEINDPHLTI…NWSSLMLEDA (143 aa)) lie on the Mitochondrial intermembrane side of the membrane. Cu cation is bound by residues His161, Cys196, Glu198, Cys200, His204, and Met207. Glu198 lines the Mg(2+) pocket.

This sequence belongs to the cytochrome c oxidase subunit 2 family. Component of the cytochrome c oxidase (complex IV, CIV), a multisubunit enzyme composed of 14 subunits. The complex is composed of a catalytic core of 3 subunits MT-CO1, MT-CO2 and MT-CO3, encoded in the mitochondrial DNA, and 11 supernumerary subunits COX4I, COX5A, COX5B, COX6A, COX6B, COX6C, COX7A, COX7B, COX7C, COX8 and NDUFA4, which are encoded in the nuclear genome. The complex exists as a monomer or a dimer and forms supercomplexes (SCs) in the inner mitochondrial membrane with NADH-ubiquinone oxidoreductase (complex I, CI) and ubiquinol-cytochrome c oxidoreductase (cytochrome b-c1 complex, complex III, CIII), resulting in different assemblies (supercomplex SCI(1)III(2)IV(1) and megacomplex MCI(2)III(2)IV(2)). Found in a complex with TMEM177, COA6, COX18, COX20, SCO1 and SCO2. Interacts with TMEM177 in a COX20-dependent manner. Interacts with COX20. Interacts with COX16. The cofactor is Cu cation.

The protein localises to the mitochondrion inner membrane. The enzyme catalyses 4 Fe(II)-[cytochrome c] + O2 + 8 H(+)(in) = 4 Fe(III)-[cytochrome c] + 2 H2O + 4 H(+)(out). Component of the cytochrome c oxidase, the last enzyme in the mitochondrial electron transport chain which drives oxidative phosphorylation. The respiratory chain contains 3 multisubunit complexes succinate dehydrogenase (complex II, CII), ubiquinol-cytochrome c oxidoreductase (cytochrome b-c1 complex, complex III, CIII) and cytochrome c oxidase (complex IV, CIV), that cooperate to transfer electrons derived from NADH and succinate to molecular oxygen, creating an electrochemical gradient over the inner membrane that drives transmembrane transport and the ATP synthase. Cytochrome c oxidase is the component of the respiratory chain that catalyzes the reduction of oxygen to water. Electrons originating from reduced cytochrome c in the intermembrane space (IMS) are transferred via the dinuclear copper A center (CU(A)) of subunit 2 and heme A of subunit 1 to the active site in subunit 1, a binuclear center (BNC) formed by heme A3 and copper B (CU(B)). The BNC reduces molecular oxygen to 2 water molecules using 4 electrons from cytochrome c in the IMS and 4 protons from the mitochondrial matrix. This is Cytochrome c oxidase subunit 2 (mt-co2) from Carassius auratus (Goldfish).